Here is a 542-residue protein sequence, read N- to C-terminus: MTVMEHTKAASIDLTKHGLRNVKEVVRNPSYEMLFAEETRADLEGYEKGVVTELGAVAVDTGIFTGRSPKDKYIVKDATTEEHMWWTTPAVPNDNKPITQEVWNDLKQLVTNQLSGKRVFVIDGYCGANPDTRLSIRVITEVAWQAHFVKNMFIRPTEEELASFEPDFVVMNGAKCTNQKWKEHGLNSENFTVFNLTERMQLIGGTWYGGEMKKGMFAMMNYFLPLKGIASMHCSANMGKEGDVAIFFGLSGTGKTTLSTDPKRALIGDDEHGWDDDGVFNFEGGCYAKTIKLSKEAEPDIYNAIRRNALLENVTVRNDGSINFDDGSKTENTRVSYPIHHIENIVKPVSKGGHANKVIFLSADAFGVLPPVSKLTPEQTKYHFLSGFTAKLAGTERGITEPTPTFSACFGAAFLTLHPTKYAEVLVKRMEEAGAEAYLVNTGWNGSGKRISIQDTRGIIDAILDGSIEEAPTKHVPIFNLEVPTSLPGVDPTILDPRDTYVDPLQWESKAQDLAQRFINNFAKYTDNAEGQSLVAAGPQLD.

Substrate is bound by residues arginine 67, tyrosine 208, and lysine 214. ATP is bound by residues lysine 214, histidine 233, and 249–257 (GLSGTGKTT). The Mn(2+) site is built by lysine 214 and histidine 233. A Mn(2+)-binding site is contributed by aspartate 270. ATP is bound by residues glutamate 298, arginine 334, 450-451 (RI), and threonine 456. Substrate is bound at residue arginine 334.

It belongs to the phosphoenolpyruvate carboxykinase (ATP) family. In terms of assembly, monomer. Requires Mn(2+) as cofactor.

It localises to the cytoplasm. The enzyme catalyses oxaloacetate + ATP = phosphoenolpyruvate + ADP + CO2. It participates in carbohydrate biosynthesis; gluconeogenesis. Its function is as follows. Involved in the gluconeogenesis. Catalyzes the conversion of oxaloacetate (OAA) to phosphoenolpyruvate (PEP) through direct phosphoryl transfer between the nucleoside triphosphate and OAA. The sequence is that of Phosphoenolpyruvate carboxykinase (ATP) from Vibrio vulnificus (strain YJ016).